We begin with the raw amino-acid sequence, 188 residues long: Adenine phosphoribosyltransferase (188 aa).

This sequence belongs to the purine/pyrimidine phosphoribosyltransferase family. In terms of assembly, homodimer.

The protein localises to the cytoplasm. It catalyses the reaction AMP + diphosphate = 5-phospho-alpha-D-ribose 1-diphosphate + adenine. It functions in the pathway purine metabolism; AMP biosynthesis via salvage pathway; AMP from adenine: step 1/1. Its function is as follows. Catalyzes a salvage reaction resulting in the formation of AMP, that is energically less costly than de novo synthesis. The sequence is that of Adenine phosphoribosyltransferase from Burkholderia cenocepacia (strain HI2424).